The following is a 391-amino-acid chain: Ammonium transporter Amt1 (391 aa).

10 consecutive transmembrane segments (helical) span residues 12-32, 51-71, 88-108, 112-132, 152-172, 192-212, 223-243, 261-281, 305-325, and 338-358; these read VFFFMWAASLIFFMKAGFIAL, LDLAAVFIAYLFIGYGISYGF, AWWMKMVMFAAAAVTIITGGV, IKILPYFIGALIVGGILYPIV, AGSGAVHLFGGLVGLMAAYVL, IPIAVLGAFILAFGWYGFNIG, LASVAMATTMALAGGIIGGAL, VAVCSGVDLFTPIGAFIVGLL, IGPVHAMSGLIGVICAGIPFL, and GQIIGAIVIALIAIVGGLIIY.

Belongs to the ammonia transporter channel (TC 1.A.11.2) family. Homotrimer. Interacts and forms a complex with GlnK1.

It is found in the cell membrane. With respect to regulation, activity is regulated by the nitrogen regulatory protein GlnK1 via direct interaction. Formation of the GlnK1/Amt1 complex is decreased in the presence of Mg-ATP or 2-oxoglutarate. The presence of both effectors abolishes the formation of the complex. Functionally, involved in the uptake of ammonium/ammonia (NH(4)(+)/NH(3)). Transport is electrogenic. This chain is Ammonium transporter Amt1, found in Methanocaldococcus jannaschii (strain ATCC 43067 / DSM 2661 / JAL-1 / JCM 10045 / NBRC 100440) (Methanococcus jannaschii).